Consider the following 205-residue polypeptide: Guanylyl cyclase-activating protein 1 (205 aa).

The N-myristoyl glycine moiety is linked to residue G2. A Deamidated asparagine modification is found at N3. EF-hand domains follow at residues 30–48 (SGQLTQHEFKQFFGLKNLS), 50–85 (ASNQYIEQMFDTFDFNKDGYMDFMEYVAALSLVLKG), 86–121 (KVEQKLRWYFKLYDVDGNGCIDRGELLNIIKAIRAI), and 129–164 (TAEEFTDMVFDKIDINGDGELSLEEFIEGVQKDELL). Residues D63, N65, D67, Y69, E74, D99, D101, N103, C105, E110, D142, N144, D146, E148, and E153 each contribute to the Ca(2+) site.

In terms of tissue distribution, retina.

In terms of biological role, regulatory protein that inhibits guanylyl cyclase when free calcium ions concentration is elevated. This Ca(2+)-sensitive regulation of retinal guanylyl cyclase is a key event in recovery of the dark state of rod photoreceptors following light exposure. This Lithobates pipiens (Northern leopard frog) protein is Guanylyl cyclase-activating protein 1 (GUCA1A).